A 379-amino-acid chain; its full sequence is L-lactate dehydrogenase (379 aa).

An FMN hydroxy acid dehydrogenase domain is found at 1-379 (MIISASTDYR…ITSDLLVKER (379 aa)). Residue Tyr-24 coordinates substrate. The FMN site is built by Ser-106 and Gln-127. A substrate-binding site is contributed by Tyr-129. Thr-155 is an FMN binding site. Substrate is bound at residue Arg-164. An FMN-binding site is contributed by Lys-251. The active-site Proton acceptor is His-275. Substrate is bound at residue Arg-278. An FMN-binding site is contributed by 306–330 (DSGIRTGLDVVRMLALGADTVLLGR).

It belongs to the FMN-dependent alpha-hydroxy acid dehydrogenase family. As to quaternary structure, homotetramer. FMN serves as cofactor.

Its subcellular location is the cell inner membrane. The enzyme catalyses (S)-lactate + A = pyruvate + AH2. Catalyzes the conversion of L-lactate to pyruvate. Is coupled to the respiratory chain. The protein is L-lactate dehydrogenase of Ectopseudomonas mendocina (strain ymp) (Pseudomonas mendocina).